Reading from the N-terminus, the 196-residue chain is DNA polymerase epsilon subunit D (196 aa).

Residues 125–196 are disordered; the sequence is RKKEKLDSGE…ETRVQNLEQT (72 aa). The segment covering 133 to 143 has biased composition (acidic residues); sequence GEVDADGDIDM. Residues 144-159 are compositionally biased toward basic and acidic residues; sequence GEDKENVPVEKVKEHD. The segment covering 160-173 has biased composition (acidic residues); the sequence is EIEEQGDALQDVEE. Basic and acidic residues predominate over residues 174 to 188; that stretch reads SSEKKQKTESQDVET. Ser183 carries the post-translational modification Phosphoserine; by ATM or ATR.

DNA polymerase epsilon is a heterotetramer consisting of POL2, DPB2, DPB3 and DPB4. Component of the ISW2 complex, which at least consists of ISW2, ITC1, DLS1 and DPB4.

The protein resides in the nucleus. Its function is as follows. As accessory component of the DNA polymerase epsilon (DNA polymerase II) participates in chromosomal DNA replication. It is required during synthesis of the leading and lagging DNA strands at the replication fork and binds at/or near replication origins and moves along DNA with the replication fork. It has 3'-5' proofreading exonuclease activity that correct errors arising during DNA replication. It is also involved in DNA synthesis during DNA repair. Also functions as a component of the ISW2 complex, which acts in remodeling the chromatin by catalyzing an ATP-dependent alteration in the structure of nucleosomal DNA. The ISW2 complex is involved in coordinating transcriptional repression and in inheritance of telomeric silencing. It is involved in repression of MAT a-specific genes, INO1, and early meiotic genes during mitotic growth dependent upon transcription factor UME6 and in a parallel pathway to the RPD3-SIN3 histone deacetylase complex. This Saccharomyces cerevisiae (strain ATCC 204508 / S288c) (Baker's yeast) protein is DNA polymerase epsilon subunit D (DPB4).